The following is a 233-amino-acid chain: Probable GTP-binding protein EngB (233 aa).

The EngB-type G domain occupies 31-205; it reads TGVEIAFAGR…RRKLDTWFGP (175 aa). GTP-binding positions include 39–46, 66–70, 84–87, 151–154, and 184–186; these read GRSNAGKS, GRTQL, DLPG, TKAD, and FSS. Residues Ser-46 and Thr-68 each contribute to the Mg(2+) site.

This sequence belongs to the TRAFAC class TrmE-Era-EngA-EngB-Septin-like GTPase superfamily. EngB GTPase family. Requires Mg(2+) as cofactor.

Functionally, necessary for normal cell division and for the maintenance of normal septation. This is Probable GTP-binding protein EngB from Photobacterium profundum (strain SS9).